Here is a 287-residue protein sequence, read N- to C-terminus: Eukaryotic translation initiation factor 3 subunit F (287 aa).

In terms of domain architecture, MPN spans 12–142 (VRVHPVVLFQ…IKAYVCVSLG (131 aa)).

This sequence belongs to the eIF-3 subunit F family. In terms of assembly, component of the eukaryotic translation initiation factor 3 (eIF-3) complex.

It localises to the cytoplasm. Component of the eukaryotic translation initiation factor 3 (eIF-3) complex, which is involved in protein synthesis of a specialized repertoire of mRNAs and, together with other initiation factors, stimulates binding of mRNA and methionyl-tRNAi to the 40S ribosome. The eIF-3 complex specifically targets and initiates translation of a subset of mRNAs involved in cell proliferation. The protein is Eukaryotic translation initiation factor 3 subunit F of Anopheles gambiae (African malaria mosquito).